We begin with the raw amino-acid sequence, 570 residues long: Phosphoenolpyruvate-protein phosphotransferase (570 aa).

The active-site Tele-phosphohistidine intermediate is the His189. Phosphoenolpyruvate contacts are provided by Arg296 and Arg332. The Mg(2+) site is built by Glu431 and Asp455. Phosphoenolpyruvate-binding positions include Asn454–Asp455 and Arg465. The Proton donor role is filled by Cys502.

Belongs to the PEP-utilizing enzyme family. In terms of assembly, homodimer. Mg(2+) serves as cofactor.

It localises to the cytoplasm. The catalysed reaction is L-histidyl-[protein] + phosphoenolpyruvate = N(pros)-phospho-L-histidyl-[protein] + pyruvate. Functionally, general (non sugar-specific) component of the phosphoenolpyruvate-dependent sugar phosphotransferase system (sugar PTS). This major carbohydrate active-transport system catalyzes the phosphorylation of incoming sugar substrates concomitantly with their translocation across the cell membrane. Enzyme I transfers the phosphoryl group from phosphoenolpyruvate (PEP) to the phosphoryl carrier protein (HPr). The protein is Phosphoenolpyruvate-protein phosphotransferase (ptsI) of Buchnera aphidicola subsp. Schizaphis graminum (strain Sg).